The sequence spans 449 residues: UDP-N-acetylmuramoylalanine--D-glutamate ligase (449 aa).

ATP is bound at residue 118–124; sequence GSNGKTT.

The protein belongs to the MurCDEF family.

The protein localises to the cytoplasm. It carries out the reaction UDP-N-acetyl-alpha-D-muramoyl-L-alanine + D-glutamate + ATP = UDP-N-acetyl-alpha-D-muramoyl-L-alanyl-D-glutamate + ADP + phosphate + H(+). It participates in cell wall biogenesis; peptidoglycan biosynthesis. In terms of biological role, cell wall formation. Catalyzes the addition of glutamate to the nucleotide precursor UDP-N-acetylmuramoyl-L-alanine (UMA). This chain is UDP-N-acetylmuramoylalanine--D-glutamate ligase, found in Leuconostoc citreum (strain KM20).